A 314-amino-acid polypeptide reads, in one-letter code: Galectin-12 (314 aa).

Galectin domains follow at residues Y27–L161 and C190–C314.

It is found in the nucleus. Its function is as follows. Binds lactose. May participate in the apoptosis of adipocytes. In Mus musculus (Mouse), this protein is Galectin-12 (Lgals12).